Reading from the N-terminus, the 182-residue chain is NADH-quinone oxidoreductase subunit I (182 aa).

4Fe-4S ferredoxin-type domains follow at residues Ile-50–Ala-82 and Glu-92–Asp-121. [4Fe-4S] cluster contacts are provided by Cys-62, Cys-65, Cys-68, Cys-72, Cys-101, Cys-104, Cys-107, and Cys-111.

It belongs to the complex I 23 kDa subunit family. In terms of assembly, NDH-1 is composed of 14 different subunits. Subunits NuoA, H, J, K, L, M, N constitute the membrane sector of the complex. Requires [4Fe-4S] cluster as cofactor.

The protein resides in the cell inner membrane. It carries out the reaction a quinone + NADH + 5 H(+)(in) = a quinol + NAD(+) + 4 H(+)(out). Its function is as follows. NDH-1 shuttles electrons from NADH, via FMN and iron-sulfur (Fe-S) centers, to quinones in the respiratory chain. The immediate electron acceptor for the enzyme in this species is believed to be ubiquinone. Couples the redox reaction to proton translocation (for every two electrons transferred, four hydrogen ions are translocated across the cytoplasmic membrane), and thus conserves the redox energy in a proton gradient. The sequence is that of NADH-quinone oxidoreductase subunit I from Psychrobacter arcticus (strain DSM 17307 / VKM B-2377 / 273-4).